The sequence spans 88 residues: Large ribosomal subunit protein bL27 (88 aa).

Polar residues predominate over residues 1 to 13 (MATKKGASSSSNG). Residues 1–25 (MATKKGASSSSNGRDSEAKRLGVKR) form a disordered region.

The protein belongs to the bacterial ribosomal protein bL27 family.

The chain is Large ribosomal subunit protein bL27 from Corynebacterium efficiens (strain DSM 44549 / YS-314 / AJ 12310 / JCM 11189 / NBRC 100395).